Consider the following 133-residue polypeptide: MQRITITLDDDLLETLDSLSQRRGYNNRSEAIRDILRSALAQEATQQHGTQGFAVLSYVYEHEKRDLASRIVSTQHHHHDLSVATLHVHINHDDCLEIAVLKGDMGDVQHFADDVIAQRGVRHGHLQCLPKED.

Ni(2+)-binding residues include His76, His87, His89, and Cys95.

It belongs to the transcriptional regulatory CopG/NikR family. As to quaternary structure, homotetramer. It depends on Ni(2+) as a cofactor.

Transcriptional repressor of the nikABCDE operon. Is active in the presence of excessive concentrations of intracellular nickel. In Escherichia coli (strain SMS-3-5 / SECEC), this protein is Nickel-responsive regulator.